The primary structure comprises 388 residues: Paired box protein Pax-5 (388 aa).

The paired DNA-binding region spans 15–141 (RHGGVNQLGG…SSINRIIRTK (127 aa)). Residues 18–74 (GVNQLGGVFVNGRPLPDVVRQRIVELAHQGVRPCDISRQLRVSHGCVSKILGRYYET) form a PAI subdomain region. The tract at residues 93–141 (KVVDKIADYKRQNPTMFAWEIRDRLLAERVCDNDTVPSVSSINRIIRTK) is RED subdomain. Residues 143 to 158 (QQPTNQQIPPSNHSIA) show a composition bias toward polar residues. Disordered stretches follow at residues 143–162 (QQPTNQQIPPSNHSIASTGS) and 191–217 (AETNKRKRDEGIQESPIPNGHSLPGRD).

First detected in mid-neurula embryos in the folding neural tube. With the completion of neurulation, expression becomes localized to the midbrain/hindbrain boundary (MHB) till at least stage 40. Expression is absent from regions adjacent to the MHB. In tailbuds, weakly and transiently expressed in the developing otic vesicle from stage 21 to stage 27.

The protein resides in the nucleus. Functionally, probable transcription factor. The chain is Paired box protein Pax-5 from Xenopus laevis (African clawed frog).